A 205-amino-acid polypeptide reads, in one-letter code: Thiamine-phosphate synthase (205 aa).

Residues 35-39 and asparagine 67 contribute to the 4-amino-2-methyl-5-(diphosphooxymethyl)pyrimidine site; that span reads QYRDK. The Mg(2+) site is built by aspartate 68 and aspartate 86. 4-amino-2-methyl-5-(diphosphooxymethyl)pyrimidine is bound at residue threonine 105. 132–134 is a binding site for 2-[(2R,5Z)-2-carboxy-4-methylthiazol-5(2H)-ylidene]ethyl phosphate; that stretch reads SLT. Lysine 135 provides a ligand contact to 4-amino-2-methyl-5-(diphosphooxymethyl)pyrimidine. Position 162 (glycine 162) interacts with 2-[(2R,5Z)-2-carboxy-4-methylthiazol-5(2H)-ylidene]ethyl phosphate.

Belongs to the thiamine-phosphate synthase family. Requires Mg(2+) as cofactor.

The enzyme catalyses 2-[(2R,5Z)-2-carboxy-4-methylthiazol-5(2H)-ylidene]ethyl phosphate + 4-amino-2-methyl-5-(diphosphooxymethyl)pyrimidine + 2 H(+) = thiamine phosphate + CO2 + diphosphate. It carries out the reaction 2-(2-carboxy-4-methylthiazol-5-yl)ethyl phosphate + 4-amino-2-methyl-5-(diphosphooxymethyl)pyrimidine + 2 H(+) = thiamine phosphate + CO2 + diphosphate. It catalyses the reaction 4-methyl-5-(2-phosphooxyethyl)-thiazole + 4-amino-2-methyl-5-(diphosphooxymethyl)pyrimidine + H(+) = thiamine phosphate + diphosphate. Its pathway is cofactor biosynthesis; thiamine diphosphate biosynthesis; thiamine phosphate from 4-amino-2-methyl-5-diphosphomethylpyrimidine and 4-methyl-5-(2-phosphoethyl)-thiazole: step 1/1. Its function is as follows. Condenses 4-methyl-5-(beta-hydroxyethyl)thiazole monophosphate (THZ-P) and 2-methyl-4-amino-5-hydroxymethyl pyrimidine pyrophosphate (HMP-PP) to form thiamine monophosphate (TMP). The protein is Thiamine-phosphate synthase of Pseudomonas syringae pv. syringae (strain B728a).